The sequence spans 434 residues: Iron transporter MagA (434 aa).

Transmembrane regions (helical) follow at residues P6–T26, P31–V51, A56–L76, K86–L106, S113–I133, L176–W196, S269–W289, T294–L314, W321–L341, and K357–M377.

This sequence belongs to the monovalent cation:proton antiporter 2 (CPA2) transporter (TC 2.A.37) family.

It is found in the membrane. Its function is as follows. Iron transporter, which is required for the synthesis of bacterial magnetic particles (BMPs). Probably involved in the transport of iron from the environment into the cytoplasm across the cell membrane, and then from the cytoplasm into the BMP lipid vesicle across the BMP membrane. The polypeptide is Iron transporter MagA (magA) (Paramagnetospirillum magneticum (strain ATCC 700264 / AMB-1) (Magnetospirillum magneticum)).